The sequence spans 251 residues: Small ribosomal subunit protein uS3 (251 aa).

The region spanning 39-112 (IRKYINEVYA…NIILNVVEVR (74 aa)) is the KH type-2 domain. The tract at residues 222-251 (EEKKPAKKFNKKPVAAKPANKEEKSSKEVK) is disordered. Over residues 240–251 (ANKEEKSSKEVK) the composition is skewed to basic and acidic residues.

Belongs to the universal ribosomal protein uS3 family. In terms of assembly, part of the 30S ribosomal subunit. Forms a tight complex with proteins S10 and S14.

Binds the lower part of the 30S subunit head. Binds mRNA in the 70S ribosome, positioning it for translation. This chain is Small ribosomal subunit protein uS3, found in Anaeroplasma abactoclasticum.